Consider the following 203-residue polypeptide: Thymidylate kinase (203 aa).

Position 10-17 (10-17 (GIDGCGKT)) interacts with ATP.

This sequence belongs to the thymidylate kinase family.

The enzyme catalyses dTMP + ATP = dTDP + ADP. In terms of biological role, phosphorylation of dTMP to form dTDP in both de novo and salvage pathways of dTTP synthesis. The chain is Thymidylate kinase from Thermoanaerobacter pseudethanolicus (strain ATCC 33223 / 39E) (Clostridium thermohydrosulfuricum).